Consider the following 508-residue polypeptide: MGLPWYRVHTVVLNDPGRLLSVHIMHTALVAGWAGSMALYELAVFDPSDPVLDPMWRQGMFVIPFMTRLGITNSWGGWSITGGTVTNPGIWSYEGVAGSHIVFSGLCFLAAIWHWVYWDLEIFCDERTGKPSLDLPKIFGIHLFLSGVACFGFGVFHVTGLYGPGIWVSDPYGLTGKVQPVNPAWGVEGFDPFVPGGIASHHIAAGTLGILAGLFHLSVRPPQRLYKGLRMGNIETVLSSSIAAVFFAAFVVAGTMWYGSATTPIELFGPTRYQWDQGYFQQEIYRRVSAGLAENKSLSEAWSKIPEKLAFYDYIGNNPAKGGLFRAGSMDNGDGIAVGWLGHPIFRDKEGRELFVRRMPTFFETFPVVLVDGDGIVRADVPFRRAESKYSVEQVGVTLEFYGGELNGVSYSDPAVVKKYARRAQLGEIFELDRATLKSDGVFRSSPRGWFTFGHASFALLFFFGHIWHGARTLFRDVFAGIDPDLDAQVEFGAFQKLGDPTTRREVV.

Transmembrane regions (helical) follow at residues 21-36 (SVHI…WAGS), 101-115 (IVFS…IWHW), 140-156 (GIHL…FGVF), 203-218 (IAAG…FHLS), 237-252 (VLSS…AFVV), and 457-472 (SFAL…HGAR).

It belongs to the PsbB/PsbC family. PsbB subfamily. In terms of assembly, PSII is composed of 1 copy each of membrane proteins PsbA, PsbB, PsbC, PsbD, PsbE, PsbF, PsbH, PsbI, PsbJ, PsbK, PsbL, PsbM, PsbT, PsbX, PsbY, PsbZ, Psb30/Ycf12, at least 3 peripheral proteins of the oxygen-evolving complex and a large number of cofactors. It forms dimeric complexes. Requires Binds multiple chlorophylls. PSII binds additional chlorophylls, carotenoids and specific lipids. as cofactor.

The protein localises to the plastid. It localises to the chloroplast thylakoid membrane. Its function is as follows. One of the components of the core complex of photosystem II (PSII). It binds chlorophyll and helps catalyze the primary light-induced photochemical processes of PSII. PSII is a light-driven water:plastoquinone oxidoreductase, using light energy to abstract electrons from H(2)O, generating O(2) and a proton gradient subsequently used for ATP formation. The chain is Photosystem II CP47 reaction center protein from Jasminum nudiflorum (Winter jasmine).